The chain runs to 194 residues: tRNA (pseudouridine(54)-N(1))-methyltransferase (194 aa).

Leucine 125 serves as a coordination point for S-adenosyl-L-methionine.

The protein belongs to the methyltransferase superfamily. TrmY family. Homodimer.

Its subcellular location is the cytoplasm. The enzyme catalyses pseudouridine(54) in tRNA + S-adenosyl-L-methionine = N(1)-methylpseudouridine(54) in tRNA + S-adenosyl-L-homocysteine + H(+). Its function is as follows. Specifically catalyzes the N1-methylation of pseudouridine at position 54 (Psi54) in tRNAs. The chain is tRNA (pseudouridine(54)-N(1))-methyltransferase from Methanospirillum hungatei JF-1 (strain ATCC 27890 / DSM 864 / NBRC 100397 / JF-1).